Consider the following 1642-residue polypeptide: MSTAIREVGVWRQTRTLLLKNYLIKCRTKKSSVQEILFPLFFLFWLILISMMHPNKKYEEVPNIELNPMDKFTLSNLILGYTPVTNITSSIMQKVSTDHLPDVIITEEYTNEKEMLTSSLSKPSNFVGVVFKDSMSYELRFFPDMIPVSSIYMDSRAGCSKSCEAAQYWSSGFTVLQASIDAAIIQLKTNVSLWKELESTKAVIMGETAVVEIDTFPRGVILIYLVIAFSPFGYFLAIHIVAEKEKKIKEFLKIMGLHDTAFWLSWVLLYTSLIFLMSLLMAVIATASLLFPQSSSIVIFLLFFLYGLSSVFFALMLTPLFKKSKHVGIVEFFVTVAFGFIGLMIILIESFPKSLVWLFSPFCHCTFVIGIAQVMHLEDFNEGASFSNLTAGPYPLIITIIMLTLNSIFYVLLAVYLDQVIPGEFGLRRSSLYFLKPSYWSKSKRNYEELSEGNVNGNISFSEIIEPVSSEFVGKEAIRISGIQKTYRKKGENVEALRNLSFDIYEGQITALLGHSGTGKSTLMNILCGLCPPSDGFASIYGHRVSEIDEMFEARKMIGICPQLDIHFDVLTVEENLSILASIKGIPANNIIQEVQKVLLDLDMQTIKDNQAKKLSGGQKRKLSLGIAVLGNPKILLLDEPTAGMDPCSRHIVWNLLKYRKANRVTVFSTHFMDEADILADRKAVISQGMLKCVGSSMFLKSKWGIGYRLSMYIDKYCATESLSSLVKQHIPGATLLQQNDQQLVYSLPFKDMDKFSGLFSALDSHSNLGVISYGVSMTTLEDVFLKLEVEAEIDQADYSVFTQQPLEEEMDSKSFDEMEQSLLILSETKAALVSTMSLWKQQMYTIAKFHFFTLKRESKSVRSVLLLLLIFFTVQIFMFLVHHSFKNAVVPIKLVPDLYFLKPGDKPHKYKTSLLLQNSADSDISDLISFFTSQNIMVTMINDSDYVSVAPHSAALNVMHSEKDYVFAAVFNSTMVYSLPILVNIISNYYLYHLNVTETIQIWSTPFFQEITDIVFKIELYFQAALLGIIVTAMPPYFAMENAENHKIKAYTQLKLSGLLPSAYWIGQAVVDIPLFFIILILMLGSLLAFHYGLYFYTVKFLAVVFCLIGYVPSVILFTYIASFTFKKILNTKEFWSFIYSVAALACIAITEITFFMGYTIATILHYAFCIIIPIYPLLGCLISFIKISWKNVRKNVDTYNPWDRLSVAVISPYLQCVLWIFLLQYYEKKYGGRSIRKDPFFRNLSTKSKNRKLPEPPDNEDEDEDVKAERLKVKELMGCQCCEEKPSIMVSNLHKEYDDKKDFLLSRKVKKVATKYISFCVKKGEILGLLGPNGAGKSTIINILVGDIEPTSGQVFLGDYSSETSEDDDSLKCMGYCPQINPLWPDTTLQEHFEIYGAVKGMSASDMKEVISRITHALDLKEHLQKTVKKLPAGIKRKLCFALSMLGNPQITLLDEPSTGMDPKAKQHMWRAIRTAFKNRKRAAILTTHYMEEAEAVCDRVAIMVSGQLRCIGTVQHLKSKFGKGYFLEIKLKDWIENLEVDRLQREIQYIFPNASRQESFSSILAYKIPKEDVQSLSQSFFKLEEAKHAFAIEEYSFSQATLEQVFVELTKEQEEEDNSCGTLNSTLWWERTQEDRVVF.

A helical transmembrane segment spans residues 32 to 52 (SVQEILFPLFFLFWLILISMM). N-linked (GlcNAc...) asparagine glycosylation is present at Asn-86. 6 consecutive transmembrane segments (helical) span residues 220–240 (VILIYLVIAFSPFGYFLAIHI), 264–284 (LSWVLLYTSLIFLMSLLMAVI), 297–317 (IVIFLLFFLYGLSSVFFALML), 328–348 (GIVEFFVTVAFGFIGLMIILI), 355–375 (LVWLFSPFCHCTFVIGIAQVM), and 396–416 (LIITIIMLTLNSIFYVLLAVY). An N-linked (GlcNAc...) asparagine glycan is attached at Asn-458. The region spanning 478-713 (IRISGIQKTY…WGIGYRLSMY (236 aa)) is the ABC transporter 1 domain. 514 to 521 (GHSGTGKS) provides a ligand contact to ATP. Helical transmembrane passes span 866 to 886 (LLLLLIFFTVQIFMFLVHHSF) and 967 to 987 (VFAAVFNSTMVYSLPILVNII). Residue Asn-996 is glycosylated (N-linked (GlcNAc...) asparagine). Transmembrane regions (helical) follow at residues 1021–1041 (LYFQAALLGIIVTAMPPYFAM), 1071–1091 (VVDIPLFFIILILMLGSLLAF), 1102–1122 (FLAVVFCLIGYVPSVILFTYI), 1139–1159 (FIYSVAALACIAITEITFFMG), 1169–1189 (AFCIIIPIYPLLGCLISFIKI), and 1207–1227 (LSVAVISPYLQCVLWIFLLQY). The disordered stretch occupies residues 1249 to 1268 (KSKNRKLPEPPDNEDEDEDV). Positions 1259-1268 (PDNEDEDEDV) are enriched in acidic residues. The region spanning 1290 to 1533 (IMVSNLHKEY…FGKGYFLEIK (244 aa)) is the ABC transporter 2 domain. Position 1333–1340 (1333–1340 (GPNGAGKS)) interacts with ATP.

Belongs to the ABC transporter superfamily. ABCA family. Post-translationally, N-glycosylated. Ubiquitously expressed. Highly expressed in testis, skeletal muscle, kidney, liver and placenta. Expressed in both the epithelial and mesenchymal compartments, present within the outer root sheath (ORS) of the hair follicle as well as dermal sheath. Expressed in multiple regions of the brain, including the hippocampus, superior frontal and inferior temporal cortices. Strongly expressed in neurons and moderately in microglia, with only weak expression in astrocytes and oligodendrocytes.

It localises to the golgi apparatus membrane. The protein resides in the lysosome membrane. The protein localises to the late endosome membrane. It is found in the cell membrane. The catalysed reaction is cholesterol(in) + ATP + H2O = cholesterol(out) + ADP + phosphate + H(+). Functionally, cholesterol efflux transporter in macrophages that is responsible for APOAI/high-density lipoproteins (HDL) formation at the plasma membrane under high cholesterol levels and participates in reverse cholesterol transport. May play a role in the processing of autolysosomes. The chain is Cholesterol transporter ABCA5 from Homo sapiens (Human).